Reading from the N-terminus, the 330-residue chain is Membrane progestin receptor gamma (330 aa).

The Cytoplasmic portion of the chain corresponds to 1 to 51 (MLSLKLPRLFSIDQIPQVFHEQGILFGYRHPQSSATACILSLFQMTNETLN). The chain crosses the membrane as a helical span at residues 52–72 (IWTHLLPFWFFAWRFVTALYM). Topologically, residues 73 to 80 (TDIKNDSY) are extracellular. Residues 81–101 (SWPMLVYMCTSCVYPLVSSCA) form a helical membrane-spanning segment. The Cytoplasmic segment spans residues 102 to 113 (HTFSSMSKNARH). Residues 114–134 (ICYFLDYGAVNLFSLGSAIAY) traverse the membrane as a helical segment. Over 135-141 (SAYTFPD) the chain is Extracellular. A helical membrane pass occupies residues 142–162 (ALMCTTFHDYYVALAVLNTIL). Topologically, residues 163–186 (STGLSCYSRFLEIQKPRLCKVIRV) are cytoplasmic. Residues 187-207 (LAFAYPYTWDSLPIFYRLFLF) form a helical membrane-spanning segment. Over 208–253 (PGESAQNEATSYHQKHMIMTLLASFLYSAHLPERLAPGRFDYIGHS) the chain is Extracellular. The chain crosses the membrane as a helical span at residues 254-274 (HQLFHVCVILATHMQMEAILL). The Cytoplasmic segment spans residues 275 to 294 (DKTLRKEWLLATSKPFSFSQ). The chain crosses the membrane as a helical span at residues 295 to 315 (IAGAILLCIIFSLSNIIYFSA). Topologically, residues 316 to 330 (ALYRIPKPELHKKET) are extracellular.

It belongs to the ADIPOR family. As to expression, expressed in the brain, lung, kidney, colon, adrenal and lung.

The protein resides in the cell membrane. Its function is as follows. Plasma membrane progesterone (P4) receptor coupled to G proteins. Seems to act through a G(i) mediated pathway. May be involved in oocyte maturation. The protein is Membrane progestin receptor gamma of Homo sapiens (Human).